A 455-amino-acid polypeptide reads, in one-letter code: Bifunctional protein GlmU (455 aa).

Positions 1-227 (MGLSVIILAA…CEEVQGVNDR (227 aa)) are pyrophosphorylase. UDP-N-acetyl-alpha-D-glucosamine is bound by residues 8–11 (LAAG), K22, Q73, 78–79 (GT), 100–102 (YGD), G137, E152, N167, and N225. Residue D102 coordinates Mg(2+). N225 provides a ligand contact to Mg(2+). Positions 228–248 (WELTKLERYYQRLMAKKLSLA) are linker. The N-acetyltransferase stretch occupies residues 249 to 455 (GVTIIDPERF…KGWHRPTKKE (207 aa)). UDP-N-acetyl-alpha-D-glucosamine-binding residues include R332 and K350. H362 acts as the Proton acceptor in catalysis. UDP-N-acetyl-alpha-D-glucosamine-binding residues include Y365 and N376. Residues A379, 385–386 (NY), S404, A422, and R439 contribute to the acetyl-CoA site.

This sequence in the N-terminal section; belongs to the N-acetylglucosamine-1-phosphate uridyltransferase family. In the C-terminal section; belongs to the transferase hexapeptide repeat family. As to quaternary structure, homotrimer. It depends on Mg(2+) as a cofactor.

The protein resides in the cytoplasm. The enzyme catalyses alpha-D-glucosamine 1-phosphate + acetyl-CoA = N-acetyl-alpha-D-glucosamine 1-phosphate + CoA + H(+). It carries out the reaction N-acetyl-alpha-D-glucosamine 1-phosphate + UTP + H(+) = UDP-N-acetyl-alpha-D-glucosamine + diphosphate. Its pathway is nucleotide-sugar biosynthesis; UDP-N-acetyl-alpha-D-glucosamine biosynthesis; N-acetyl-alpha-D-glucosamine 1-phosphate from alpha-D-glucosamine 6-phosphate (route II): step 2/2. It functions in the pathway nucleotide-sugar biosynthesis; UDP-N-acetyl-alpha-D-glucosamine biosynthesis; UDP-N-acetyl-alpha-D-glucosamine from N-acetyl-alpha-D-glucosamine 1-phosphate: step 1/1. It participates in bacterial outer membrane biogenesis; LPS lipid A biosynthesis. Catalyzes the last two sequential reactions in the de novo biosynthetic pathway for UDP-N-acetylglucosamine (UDP-GlcNAc). The C-terminal domain catalyzes the transfer of acetyl group from acetyl coenzyme A to glucosamine-1-phosphate (GlcN-1-P) to produce N-acetylglucosamine-1-phosphate (GlcNAc-1-P), which is converted into UDP-GlcNAc by the transfer of uridine 5-monophosphate (from uridine 5-triphosphate), a reaction catalyzed by the N-terminal domain. The protein is Bifunctional protein GlmU of Coxiella burnetii (strain RSA 493 / Nine Mile phase I).